We begin with the raw amino-acid sequence, 359 residues long: Peptide chain release factor 1 (359 aa).

Position 235 is an N5-methylglutamine (Gln-235). The disordered stretch occupies residues 287-312 (AQEASAMRSAQVGSGDRSERIRTYNF).

Belongs to the prokaryotic/mitochondrial release factor family. Methylated by PrmC. Methylation increases the termination efficiency of RF1.

Its subcellular location is the cytoplasm. Peptide chain release factor 1 directs the termination of translation in response to the peptide chain termination codons UAG and UAA. The chain is Peptide chain release factor 1 from Chlamydia trachomatis serovar L2 (strain ATCC VR-902B / DSM 19102 / 434/Bu).